A 66-amino-acid chain; its full sequence is Beta-toxin Cll1m (66 aa).

One can recognise an LCN-type CS-alpha/beta domain in the interval 1-66 (KEGYIVNLST…VWPLPKKTCT (66 aa)). Intrachain disulfides connect Cys-12–Cys-65, Cys-16–Cys-41, Cys-25–Cys-46, and Cys-29–Cys-48. Thr-66 bears the Threonine amide mark.

Belongs to the long (4 C-C) scorpion toxin superfamily. Sodium channel inhibitor family. Beta subfamily. As to expression, expressed by the venom gland.

The protein resides in the secreted. Its function is as follows. Beta toxins bind voltage-independently at site-4 of sodium channels (Nav) and shift the voltage of activation toward more negative potentials thereby affecting sodium channel activation and promoting spontaneous and repetitive firing. The sequence is that of Beta-toxin Cll1m from Centruroides limpidus (Mexican scorpion).